The chain runs to 196 residues: MAKLHFYYSAMNAGKSTTLLQSSYNYNERGMDTLVFLPVVDDREGERKIATRIGLSGKTIALTKDTNLFKCISDKLAENPNIRCVLVDEAQFLTKSQVEALALVTDELNLPVLAYGIRTDFQGEPFEGSVYLLAWADLLIEIKTICHCGRKATMNLRIDDEGNPIREGEQIRLGGNDRYTATCRKHFRLGQPTQTK.

Residues 9–16 (SAMNAGKS) and 88–91 (DEAQ) each bind ATP. Catalysis depends on E89, which acts as the Proton acceptor. Zn(2+) contacts are provided by C146, C148, C183, and H186.

The protein belongs to the thymidine kinase family. As to quaternary structure, homotetramer.

It is found in the cytoplasm. It catalyses the reaction thymidine + ATP = dTMP + ADP + H(+). This is Thymidine kinase from Coxiella burnetii (strain RSA 493 / Nine Mile phase I).